The primary structure comprises 126 residues: Small ribosomal subunit protein uS11 (126 aa).

It belongs to the universal ribosomal protein uS11 family. In terms of assembly, part of the 30S ribosomal subunit. Interacts with proteins S7 and S18. Binds to IF-3.

Located on the platform of the 30S subunit, it bridges several disparate RNA helices of the 16S rRNA. Forms part of the Shine-Dalgarno cleft in the 70S ribosome. The polypeptide is Small ribosomal subunit protein uS11 (Desulfotalea psychrophila (strain LSv54 / DSM 12343)).